Here is a 65-residue protein sequence, read N- to C-terminus: Large ribosomal subunit protein bL35 (65 aa).

A compositionally biased stretch (basic residues) spans methionine 1–valine 16. A disordered region spans residues methionine 1 to glycine 25.

This sequence belongs to the bacterial ribosomal protein bL35 family.

In Bordetella parapertussis (strain 12822 / ATCC BAA-587 / NCTC 13253), this protein is Large ribosomal subunit protein bL35.